A 223-amino-acid polypeptide reads, in one-letter code: GrpE protein homolog, mitochondrial (223 aa).

The protein belongs to the GrpE family. As to quaternary structure, component of the PAM complex, at least composed of mtHsp70, mge1, tim44, pam16, pam17 and pam18.

It localises to the mitochondrion matrix. Its function is as follows. Essential component of the PAM complex, a complex required for the translocation of transit peptide-containing proteins from the inner membrane into the mitochondrial matrix in an ATP-dependent manner. Seems to control the nucleotide-dependent binding of ssc1 to substrate proteins. The protein is GrpE protein homolog, mitochondrial (mge1) of Schizosaccharomyces pombe (strain 972 / ATCC 24843) (Fission yeast).